Here is an 810-residue protein sequence, read N- to C-terminus: ATP-dependent RNA helicase dbp4 (810 aa).

Positions methionine 1–aspartate 28 are disordered. The span at threonine 9 to arginine 25 shows a compositional bias: basic residues. Positions lysine 47–serine 75 match the Q motif motif. The Helicase ATP-binding domain occupies isoleucine 78–valine 252. Alanine 91–threonine 98 contributes to the ATP binding site. Positions aspartate 200–aspartate 203 match the DEAD box motif. The 160-residue stretch at lysine 278–cysteine 437 folds into the Helicase C-terminal domain. 3 disordered regions span residues glycine 494–phenylalanine 542, alanine 590–valine 615, and glutamate 690–glycine 810. Positions glycine 522–phenylalanine 542 are enriched in basic and acidic residues. Positions glutamate 690–lysine 704 are enriched in basic and acidic residues. Residues glutamine 705–arginine 714 show a composition bias toward basic residues. Residues lysine 764–aspartate 786 show a composition bias toward basic and acidic residues.

This sequence belongs to the DEAD box helicase family. DDX10/DBP4 subfamily. Interacts with the U3 and U14 snoRNAs. Associates with pre-ribosomal complexes.

It localises to the nucleus. The protein localises to the nucleolus. The enzyme catalyses ATP + H2O = ADP + phosphate + H(+). In terms of biological role, ATP-dependent RNA helicase required for ribosome biogenesis. Involved in the release of U14 snoRNA in pre-ribosomal complexes. Required for pre-rRNA cleavage at site A2. This chain is ATP-dependent RNA helicase dbp4 (dbp4), found in Neosartorya fischeri (strain ATCC 1020 / DSM 3700 / CBS 544.65 / FGSC A1164 / JCM 1740 / NRRL 181 / WB 181) (Aspergillus fischerianus).